The primary structure comprises 650 residues: MASNNDPTVISMIERHLCDLPETNTSDLKTLTEEAVLSFHNISYQETVQSGFPLRKKAYVIERLSNISGIMKPGLNAIMGPQDGSRSLLLDVLAARRDPRGLSGDILINGKPRPANFKCTSGYVPQNDVVLGTVTVRDNLEFSAALRLPVTITRDEKRRRINEVLELLHLNKEQNIKPRSKELRKRTSIAMELVTEHPILFLDDPTTGLDLRTTTDVILVLRRMSKKGRTIIFSINQPQYSIFKFFDSLTLVASGKVMFHGPAQDALEYFRSAGYNYESHNNPADFFLDVINGGFSNILDTEEDGHEDDKYEELFERQYQVTGKLANMYAQSPLYSETRAILDQLLGEQKLERSSAVETTCVTPFCHQLKWIICQSFKNFKGFPWVTVIQAIITVILATAVGTAFRVLKNDCIEVQMRAGLLYLLTIFQCITSVSAGELFVIDRVRFLHEHTSGYYRVSSYFFGKLLAELIPRRLLPSTVFSLITYVIAGVKMSMKCFFTMICTIMVLAYSASSLPLSIGAGENAVAVPTLLVTIYFVFMLFFSGLSLYSGSFLPKLSWIQYFSIPHYGFRALLHNEFLGQNFCPEHNTEEVSRCHNYVICTGEEFLMIQGIDLSSWGFWENHLALVCTMIILLTITYVQLLQVKNIRNF.

The Cytoplasmic segment spans residues 1–387; sequence MASNNDPTVI…KNFKGFPWVT (387 aa). Positions 37 to 279 constitute an ABC transporter domain; it reads LSFHNISYQE…FRSAGYNYES (243 aa). The region spanning 381 to 644 is the ABC transmembrane type-2 domain; sequence KGFPWVTVIQ…TITYVQLLQV (264 aa). A helical membrane pass occupies residues 388–408; that stretch reads VIQAIITVILATAVGTAFRVL. The Extracellular segment spans residues 409–420; the sequence is KNDCIEVQMRAG. A helical transmembrane segment spans residues 421-441; it reads LLYLLTIFQCITSVSAGELFV. Topologically, residues 442–469 are cytoplasmic; that stretch reads IDRVRFLHEHTSGYYRVSSYFFGKLLAE. Residues 470–490 form a helical membrane-spanning segment; the sequence is LIPRRLLPSTVFSLITYVIAG. The Extracellular segment spans residues 491-498; the sequence is VKMSMKCF. Residues 499-519 form a helical membrane-spanning segment; sequence FTMICTIMVLAYSASSLPLSI. Residues 520–527 are Cytoplasmic-facing; sequence GAGENAVA. A helical transmembrane segment spans residues 528–548; sequence VPTLLVTIYFVFMLFFSGLSL. The Extracellular portion of the chain corresponds to 549–623; the sequence is YSGSFLPKLS…LSSWGFWENH (75 aa). The helical transmembrane segment at 624 to 644 threads the bilayer; that stretch reads LALVCTMIILLTITYVQLLQV. Over 645–648 the chain is Cytoplasmic; that stretch reads KNIR.

This sequence belongs to the ABC transporter superfamily. ABCG family. Eye pigment precursor importer (TC 3.A.1.204) subfamily. As to quaternary structure, may dimerize with another subunit to form a functional transporter. As to expression, highest levels of expression in thymus and spleen. Detected in lung and small intestine.

It is found in the membrane. This chain is ATP-binding cassette sub-family G member 3 (Abcg3), found in Mus musculus (Mouse).